A 442-amino-acid chain; its full sequence is ATP-dependent protease ATPase subunit HslU (442 aa).

ATP is bound by residues isoleucine 18, 60–65 (GVGKTE), aspartate 255, glutamate 320, and arginine 392.

Belongs to the ClpX chaperone family. HslU subfamily. A double ring-shaped homohexamer of HslV is capped on each side by a ring-shaped HslU homohexamer. The assembly of the HslU/HslV complex is dependent on binding of ATP.

The protein localises to the cytoplasm. Functionally, ATPase subunit of a proteasome-like degradation complex; this subunit has chaperone activity. The binding of ATP and its subsequent hydrolysis by HslU are essential for unfolding of protein substrates subsequently hydrolyzed by HslV. HslU recognizes the N-terminal part of its protein substrates and unfolds these before they are guided to HslV for hydrolysis. In Shewanella putrefaciens (strain CN-32 / ATCC BAA-453), this protein is ATP-dependent protease ATPase subunit HslU.